Here is a 451-residue protein sequence, read N- to C-terminus: GTPase Der (451 aa).

EngA-type G domains lie at 5–170 (PVVA…VEPE) and 186–359 (IKLA…AAAF). GTP-binding positions include 11–18 (GRPNVGKS), 58–62 (DTGGF), 122–125 (NKAE), 192–199 (GRPNVGKS), 239–243 (DTAGL), and 304–307 (NKWD). One can recognise a KH-like domain in the interval 360–444 (AKLSTPKLTR…PLRIEFKSSR (85 aa)).

This sequence belongs to the TRAFAC class TrmE-Era-EngA-EngB-Septin-like GTPase superfamily. EngA (Der) GTPase family. In terms of assembly, associates with the 50S ribosomal subunit.

Its function is as follows. GTPase that plays an essential role in the late steps of ribosome biogenesis. In Bordetella petrii (strain ATCC BAA-461 / DSM 12804 / CCUG 43448), this protein is GTPase Der.